The chain runs to 304 residues: Aspartate carbamoyltransferase catalytic subunit (304 aa).

The carbamoyl phosphate site is built by Arg-55 and Thr-56. Lys-84 contributes to the L-aspartate binding site. Residues Arg-105, His-133, and Gln-136 each coordinate carbamoyl phosphate. L-aspartate-binding residues include Arg-165 and Arg-226. Positions 265 and 266 each coordinate carbamoyl phosphate.

This sequence belongs to the aspartate/ornithine carbamoyltransferase superfamily. ATCase family. As to quaternary structure, heterooligomer of catalytic and regulatory chains.

The enzyme catalyses carbamoyl phosphate + L-aspartate = N-carbamoyl-L-aspartate + phosphate + H(+). Its pathway is pyrimidine metabolism; UMP biosynthesis via de novo pathway; (S)-dihydroorotate from bicarbonate: step 2/3. In terms of biological role, catalyzes the condensation of carbamoyl phosphate and aspartate to form carbamoyl aspartate and inorganic phosphate, the committed step in the de novo pyrimidine nucleotide biosynthesis pathway. The polypeptide is Aspartate carbamoyltransferase catalytic subunit (Methanothrix thermoacetophila (strain DSM 6194 / JCM 14653 / NBRC 101360 / PT) (Methanosaeta thermophila)).